Reading from the N-terminus, the 405-residue chain is Protein PAG1 (405 aa).

The signal sequence occupies residues 1-50 (MVSLIILFRLTFAIANRVRTLMKVLVIVSFFVLTGSASADSGALSLSGAA). N-linked (GlcNAc...) asparagine glycosylation is found at Asn-55, Asn-104, Asn-256, and Asn-351. Ala-391 is lipidated: GPI-anchor amidated alanine. Residues 392-405 (DSLRRTLALLFLLF) constitute a propeptide, removed in mature form.

It is found in the cell membrane. The protein is Protein PAG1 (PAG1) of Trypanosoma brucei brucei.